Reading from the N-terminus, the 178-residue chain is Putative pre-16S rRNA nuclease (178 aa).

Composition is skewed to basic and acidic residues over residues 1-18 (MDHAEQGPDRPGVDDPGR) and 50-60 (PRSKDRGPDAP). Disordered stretches follow at residues 1–23 (MDHAEQGPDRPGVDDPGRGRRIG) and 36–60 (SDPDGILATPVETVPRSKDRGPDAP).

Belongs to the YqgF nuclease family.

The protein resides in the cytoplasm. In terms of biological role, could be a nuclease involved in processing of the 5'-end of pre-16S rRNA. The polypeptide is Putative pre-16S rRNA nuclease (Rhodococcus opacus (strain B4)).